The following is a 219-amino-acid chain: Thiopurine S-methyltransferase (219 aa).

Residues Trp10, Leu45, Glu66, and Arg123 each coordinate S-adenosyl-L-methionine.

Belongs to the class I-like SAM-binding methyltransferase superfamily. TPMT family.

Its subcellular location is the cytoplasm. The enzyme catalyses S-adenosyl-L-methionine + a thiopurine = S-adenosyl-L-homocysteine + a thiopurine S-methylether.. The polypeptide is Thiopurine S-methyltransferase (Bordetella bronchiseptica (strain ATCC BAA-588 / NCTC 13252 / RB50) (Alcaligenes bronchisepticus)).